We begin with the raw amino-acid sequence, 916 residues long: MAEEIDDNEFYRENFSADSDWEVFNAQLGEILQKWDVSSDSETRNLKSEEIFSCNWKVEREKLDMLRNGIEVEYHQAILEDEELVRAEAKEITCLQRTSCHHDLMSTGNSFGPPIRSSQELHILARIYGLRRFIVLHPVNPTLNYMRSTSEFNFFLSAVAVVSAEVQSLVPIFVQIYDPKWNYYTGVALAPALRTNFRLIGLEKAPPECRFLMGLLTLFREKVPTSYTQAAMISVCTTYALDTMRIRMPMYVPFDHGLSSEDIVVDGEVSHLEVQQFCALPHGYKPESRTEIYLVYTWPELSEHVAFDSEQRSDFVPAKAPLGKIYLSVEASSYLSCCLRDYQSVAEVTRSLESFVGRNFSGTSSGAEAASNPLDRITEHKLTKRRERSFELPSQAGLTKRLPGPMTESELSELLAYLFPDMHPEMALFPYAKKNFTDKFDPMRIKSAVPDSLVCRLSCLLATCHAHLGSVEGMAQVWAAFTRQLRLLWDNSLMVPGISAGFPDTRTCLLHQKLQMLNVCVERRVQREANSKRKSEGMVGKASSEEEEDEDDDEGEFFDCDDLTAGAGSPTKAVLSLKPEGRLRRLNNERLLEEPDEYLYIPDTQEPVPKTEDQLQDDAEVMLKLGPGSGLTTQMMCTSLLSDMEAFKAANPRGIMEDFIRWYSPKDWEEVTDELGQVKHQLSIRMTTEGNTWQKVWEQAQAVPVSRQKRLFDDTNEALKVLHYLETRKMHEIYNLTVIPLLHSAILKLADILSNAELEDLFSSQIEKLLSDLCRLSRSHSDELPSIKPLLDDLAELERRFYQFKCFERLSGYPKRSSLQQVKLQFEEILRNDNCCTIVNRRLTAAGDGTLYDILIPKLEEDMADRLISKDYIIRLDGDTKTTEKGLYLGPQFMRAIVTGEKLRLCGAFTESTAFV.

Residues 530–574 (NSKRKSEGMVGKASSEEEEDEDDDEGEFFDCDDLTAGAGSPTKAV) are disordered. Phosphoserine occurs at positions 543 and 544. Over residues 545–562 (EEEEDEDDDEGEFFDCDD) the composition is skewed to acidic residues.

It belongs to the Rab3-GAP catalytic subunit family. As to quaternary structure, the Rab3 GTPase-activating complex is a heterodimer composed of Rab3GAP1 and Rab3-GAP.

The protein localises to the cytoplasm. Its function is as follows. Catalytic subunit of the Rab3 GTPase-activating (Rab3GAP) complex composed of Rab3-GAP and Rab3GAP1, which has both GTPase-activating protein (GAP) activity towards Rab3, and guanine nucleotide exchange factor (GEF) activity towards Rab18. As part of the Rab3GAP complex, required for the rapid induction and sustained expression of synaptic homeostasis at the neuromuscular junction (NMJ). Also participates in the regulation of autophagy in tissues such as larval fat cells and adult muscles. The Rab3GAP complex, acts as a GAP for Rab3 by converting active Rab3-GTP to the inactive form Rab3-GDP. At the neuromuscular junction (NMJ), forms a presynaptic signaling mechanism with Rab3 that regulates progression of synaptic homeostasis at a late stage of vesicle release. Within this mechanism Rab3-GTP acts, directly or indirectly, to inhibit the progression of synaptic homeostasis, and Rab3-GAP functions to inactivate this action of Rab3-GTP. The Rab3GAP complex, acts as a GEF for Rab18 by promoting the conversion of inactive Rab18-GDP to the active form Rab18-GTP. Regulates autophagy as part of a Rab3GAP-Rab18 module. Once Rab18 is activated by the GEF Rab3GAP complex, the Rab3GAP-Rab18 module localizes to autophagosomes, and regulates autolysosome formation and maturation together with the Rab18 interacting effector, the PI3K/Vps34 Complex I. The chain is Rab3 GTPase-activating protein catalytic subunit from Drosophila melanogaster (Fruit fly).